Consider the following 488-residue polypeptide: N-succinylglutamate 5-semialdehyde dehydrogenase (488 aa).

Residue 221–226 (GSSRTG) participates in NAD(+) binding. Catalysis depends on residues glutamate 244 and cysteine 278.

The protein belongs to the aldehyde dehydrogenase family. AstD subfamily.

The catalysed reaction is N-succinyl-L-glutamate 5-semialdehyde + NAD(+) + H2O = N-succinyl-L-glutamate + NADH + 2 H(+). It participates in amino-acid degradation; L-arginine degradation via AST pathway; L-glutamate and succinate from L-arginine: step 4/5. Functionally, catalyzes the NAD-dependent reduction of succinylglutamate semialdehyde into succinylglutamate. This Pseudomonas syringae pv. tomato (strain ATCC BAA-871 / DC3000) protein is N-succinylglutamate 5-semialdehyde dehydrogenase.